We begin with the raw amino-acid sequence, 689 residues long: MNFENLLIEIGTEELPPKSLRKLAESFLANFTEELTKAELSFESAVWHAAPRRLAICINQLALAQADKVVEKRGPAVAQAFDADGNPTKAAMGWARGNGITVEQAERLKTDKGEWLLHQARVVGVETKSLIADMAQRSLDKLPIPKPMRWGSNTTQFIRPVHTVTMLLGSEVVDGELLGIKSDRIIRGHRFMGESSFKLDHADNYLVALKEKGKVLADYEARKAIIKTDAEAAAAKIGGVADLEDDLLEEVTSLVEWPVVLTASFEEKFLDVPAEALVYTMKGDQKYFPVFDNAGQLLPNFIFVTNIESKDPQQIIAGNEKVVRPRLADAEFFFETDKKDTLEARLTSLETVVFQKQLGTIKQRVERISAMAGYIATSIDANSEEAARAGLLSKSDLMTNMVMEFTDLQGTMGMHYARLNGETEAVAVALSEQYKPKFSGDTVPTAPISICVALAEKLDTLVGIFGIGQAPKGAADPFALRRAAIGVLRICLENNLPLDLVDLIAKAQELHGENLTNADVAEQVLEFFMARFRAWYQDQGVSVDVILAVLARRPTAPADFESRIKAVAHFRTLEQASALAAANKRVSNILAKVEGELPAAIDDKLLVEAAEKALAEKLAELQPQLAPLFAAANYQEALALLASLRESVDTFFEDVMVMADDEALKNNRLALLSSLREQFLHAADISLLQ.

This sequence belongs to the class-II aminoacyl-tRNA synthetase family. As to quaternary structure, tetramer of two alpha and two beta subunits.

It is found in the cytoplasm. It carries out the reaction tRNA(Gly) + glycine + ATP = glycyl-tRNA(Gly) + AMP + diphosphate. The polypeptide is Glycine--tRNA ligase beta subunit (Shewanella pealeana (strain ATCC 700345 / ANG-SQ1)).